The sequence spans 325 residues: D-alanine--D-alanine ligase (325 aa).

The 201-residue stretch at 109 to 309 (KRVCKERMLP…FCTLLDQLIE (201 aa)) folds into the ATP-grasp domain. Residue 136–191 (CRRLPFPMFVKPANLGSSVGISKAHDEQELEAAFSLAKQYDRKIIVERGIEGRELE) coordinates ATP. Residues Asp262, Glu276, and Asn278 each contribute to the Mg(2+) site.

This sequence belongs to the D-alanine--D-alanine ligase family. Requires Mg(2+) as cofactor. Mn(2+) is required as a cofactor.

Its subcellular location is the cytoplasm. The enzyme catalyses 2 D-alanine + ATP = D-alanyl-D-alanine + ADP + phosphate + H(+). The protein operates within cell wall biogenesis; peptidoglycan biosynthesis. In terms of biological role, cell wall formation. The chain is D-alanine--D-alanine ligase from Solibacter usitatus (strain Ellin6076).